A 68-amino-acid polypeptide reads, in one-letter code: MAQERIFGTGSRREDEPDTPAPVDPPVSGAAQAQRDMQGTDDLLAEIDGVLETNAEAFVKGFVQKGGQ.

Residues 1–37 (MAQERIFGTGSRREDEPDTPAPVDPPVSGAAQAQRDM) form a disordered region. Residues 24–62 (DPPVSGAAQAQRDMQGTDDLLAEIDGVLETNAEAFVKGF) are ARC ATPase binding. The residue at position 68 (Gln68) is a Deamidated glutamine. Residue Gln68 forms an Isoglutamyl lysine isopeptide (Gln-Lys) (interchain with K-? in acceptor proteins) linkage.

The protein belongs to the prokaryotic ubiquitin-like protein family. Strongly interacts with the proteasome-associated ATPase ARC through a hydrophobic interface; the interacting region of Pup lies in its C-terminal half. There is one Pup binding site per ARC hexamer ring. In terms of processing, is modified by deamidation of its C-terminal glutamine to glutamate by the deamidase Dop, a prerequisite to the subsequent pupylation process.

The protein operates within protein degradation; proteasomal Pup-dependent pathway. Protein modifier that is covalently attached to lysine residues of substrate proteins, thereby targeting them for proteasomal degradation. The tagging system is termed pupylation. The protein is Prokaryotic ubiquitin-like protein Pup of Kocuria rhizophila (strain ATCC 9341 / DSM 348 / NBRC 103217 / DC2201).